The chain runs to 337 residues: Holliday junction branch migration complex subunit RuvB (337 aa).

The large ATPase domain (RuvB-L) stretch occupies residues Gln-4–Tyr-184. ATP is bound by residues Ile-23, Arg-24, Gly-65, Lys-68, Thr-69, Thr-70, Glu-131 to Tyr-133, Arg-174, Tyr-184, and Arg-221. A Mg(2+)-binding site is contributed by Thr-69. The segment at Asp-185–Ser-255 is small ATPAse domain (RuvB-S). Positions Ser-258–Lys-337 are head domain (RuvB-H). 2 residues coordinate DNA: Arg-313 and Arg-318.

This sequence belongs to the RuvB family. In terms of assembly, homohexamer. Forms an RuvA(8)-RuvB(12)-Holliday junction (HJ) complex. HJ DNA is sandwiched between 2 RuvA tetramers; dsDNA enters through RuvA and exits via RuvB. An RuvB hexamer assembles on each DNA strand where it exits the tetramer. Each RuvB hexamer is contacted by two RuvA subunits (via domain III) on 2 adjacent RuvB subunits; this complex drives branch migration. In the full resolvosome a probable DNA-RuvA(4)-RuvB(12)-RuvC(2) complex forms which resolves the HJ.

The protein resides in the cytoplasm. It carries out the reaction ATP + H2O = ADP + phosphate + H(+). The RuvA-RuvB-RuvC complex processes Holliday junction (HJ) DNA during genetic recombination and DNA repair, while the RuvA-RuvB complex plays an important role in the rescue of blocked DNA replication forks via replication fork reversal (RFR). RuvA specifically binds to HJ cruciform DNA, conferring on it an open structure. The RuvB hexamer acts as an ATP-dependent pump, pulling dsDNA into and through the RuvAB complex. RuvB forms 2 homohexamers on either side of HJ DNA bound by 1 or 2 RuvA tetramers; 4 subunits per hexamer contact DNA at a time. Coordinated motions by a converter formed by DNA-disengaged RuvB subunits stimulates ATP hydrolysis and nucleotide exchange. Immobilization of the converter enables RuvB to convert the ATP-contained energy into a lever motion, pulling 2 nucleotides of DNA out of the RuvA tetramer per ATP hydrolyzed, thus driving DNA branch migration. The RuvB motors rotate together with the DNA substrate, which together with the progressing nucleotide cycle form the mechanistic basis for DNA recombination by continuous HJ branch migration. Branch migration allows RuvC to scan DNA until it finds its consensus sequence, where it cleaves and resolves cruciform DNA. The chain is Holliday junction branch migration complex subunit RuvB from Marinomonas sp. (strain MWYL1).